A 189-amino-acid polypeptide reads, in one-letter code: Potassium-transporting ATPase KdpC subunit (189 aa).

A helical transmembrane segment spans residues 10–30; it reads VIFAMLTLICGVIYPYAITGI.

This sequence belongs to the KdpC family. As to quaternary structure, the system is composed of three essential subunits: KdpA, KdpB and KdpC.

It localises to the cell inner membrane. Part of the high-affinity ATP-driven potassium transport (or Kdp) system, which catalyzes the hydrolysis of ATP coupled with the electrogenic transport of potassium into the cytoplasm. This subunit acts as a catalytic chaperone that increases the ATP-binding affinity of the ATP-hydrolyzing subunit KdpB by the formation of a transient KdpB/KdpC/ATP ternary complex. In Janthinobacterium sp. (strain Marseille) (Minibacterium massiliensis), this protein is Potassium-transporting ATPase KdpC subunit.